We begin with the raw amino-acid sequence, 141 residues long: Hemoglobin subunit alpha (141 aa).

In terms of domain architecture, Globin spans 1 to 141; that stretch reads VLSPADKTNV…VSTVLTSKYR (141 aa). Ser3 carries the phosphoserine modification. Lys7 carries the N6-succinyllysine modification. Thr8 carries the phosphothreonine modification. Lys11 carries the post-translational modification N6-succinyllysine. Lys16 carries the post-translational modification N6-acetyllysine; alternate. The residue at position 16 (Lys16) is an N6-succinyllysine; alternate. The residue at position 35 (Ser35) is a Phosphoserine. N6-succinyllysine is present on Lys40. Position 58 (His58) interacts with O2. His87 contributes to the heme b binding site. Ser102 carries the post-translational modification Phosphoserine. At Thr108 the chain carries Phosphothreonine. Ser124 and Ser131 each carry phosphoserine. Phosphothreonine is present on residues Thr134 and Thr137. A Phosphoserine modification is found at Ser138.

It belongs to the globin family. In terms of assembly, heterotetramer of two alpha chains and two beta chains. Red blood cells.

Involved in oxygen transport from the lung to the various peripheral tissues. Its function is as follows. Hemopressin acts as an antagonist peptide of the cannabinoid receptor CNR1. Hemopressin-binding efficiently blocks cannabinoid receptor CNR1 and subsequent signaling. This Physeter macrocephalus (Sperm whale) protein is Hemoglobin subunit alpha (HBA).